The sequence spans 1484 residues: Chromosome partition protein MukB (1484 aa).

34–41 lines the ATP pocket; that stretch reads GGNGAGKS. Coiled coils occupy residues 338–415, 496–604, 781–805, 835–868, 903–1115, and 1206–1265; these read NLVQ…RAIQ, QTAR…ALAW, AARE…ATLS, EAEM…HYDQ, HDAQ…SAKA, and DDPV…LQAV. Residues 666–783 form a flexible hinge region; it reads PGGTDDARLT…AVPLFGRAAR (118 aa).

The protein belongs to the SMC family. MukB subfamily. As to quaternary structure, homodimerization via its hinge domain. Binds to DNA via its C-terminal region. Interacts, and probably forms a ternary complex, with MukE and MukF via its C-terminal region. The complex formation is stimulated by calcium or magnesium. Interacts with tubulin-related protein FtsZ.

The protein localises to the cytoplasm. Its subcellular location is the nucleoid. Functionally, plays a central role in chromosome condensation, segregation and cell cycle progression. Functions as a homodimer, which is essential for chromosome partition. Involved in negative DNA supercoiling in vivo, and by this means organize and compact chromosomes. May achieve or facilitate chromosome segregation by condensation DNA from both sides of a centrally located replisome during cell division. The protein is Chromosome partition protein MukB of Sodalis glossinidius (strain morsitans).